The sequence spans 379 residues: Anthranilate O-methyltransferase 3 (379 aa).

Residues 1–10 (MPMRIERDLH) are compositionally biased toward basic and acidic residues. The tract at residues 1-21 (MPMRIERDLHMATGNGETSYT) is disordered. Tyr-20 is an S-adenosyl-L-homocysteine binding site. An anthranilate-binding site is contributed by Gln-27. S-adenosyl-L-homocysteine contacts are provided by Cys-61, Asn-66, Asp-100, Leu-101, Ser-143, and Phe-144. Anthranilate-binding residues include His-164 and Trp-165. Positions 265 and 267 each coordinate Mg(2+).

Belongs to the methyltransferase superfamily. Type-7 methyltransferase family. SABATH subfamily.

It catalyses the reaction anthranilate + S-adenosyl-L-methionine = O-methyl anthranilate + S-adenosyl-L-homocysteine. It carries out the reaction benzoate + S-adenosyl-L-methionine = methyl benzoate + S-adenosyl-L-homocysteine. The catalysed reaction is salicylate + S-adenosyl-L-methionine = methyl salicylate + S-adenosyl-L-homocysteine. In terms of biological role, methyltransferase involved in the biosynthesis of methyl anthranilate in response to stresses. Utilizes anthranilic acid as substrate. Produces exclusively the O-methyl ester. Can also use benzoic acid as substrate. Low activity with salicylic acid. The protein is Anthranilate O-methyltransferase 3 (AAMT3) of Zea mays (Maize).